The sequence spans 397 residues: Metal tolerance protein 4 (397 aa).

Positions 1–19 are enriched in basic and acidic residues; that stretch reads MEAKGENDARAPLLAERRR. A disordered region spans residues 1–27; the sequence is MEAKGENDARAPLLAERRRNSVGSMRG. Residues 1–104 are Cytoplasmic-facing; that stretch reads MEAKGENDAR…EQKQSEFAMK (104 aa). The chain crosses the membrane as a helical span at residues 105–122; the sequence is ISNYANMILLALKIYATI. The Vacuolar segment spans residues 123–126; it reads KSGS. Residues 127–147 traverse the membrane as a helical segment; sequence IAIAASTLDSLLDLMAGGILW. Residues 148–170 lie on the Cytoplasmic side of the membrane; that stretch reads FTHLSMKSINVYKYPIGKLRVQP. A helical membrane pass occupies residues 171-191; the sequence is VGIIIFAAVMATLGFQVFVQA. The Vacuolar segment spans residues 192 to 208; that stretch reads VEKLIVNETPDKLTPVQ. The helical transmembrane segment at 209–229 threads the bilayer; that stretch reads LTWLYSIMIFATVVKLALWLY. Over 230 to 248 the chain is Cytoplasmic; that stretch reads CRTSGNKIVRAYAKDHYFD. A helical membrane pass occupies residues 249–269; sequence VVTNVVGLAAAVLGDMFYWWI. Residue aspartate 270 is a topological domain, vacuolar. Residues 271–291 form a helical membrane-spanning segment; it reads PVGAIALAVYTITNWSGTVWE. Over 292-397 the chain is Cytoplasmic; sequence NAVSLVGESA…ILSKLPSSQP (106 aa).

Belongs to the cation diffusion facilitator (CDF) transporter (TC 2.A.4) family. SLC30A subfamily.

Its subcellular location is the vacuole membrane. Functionally, involved in sequestration of excess metal in the cytoplasm into vacuoles to maintain metal homeostasis. The chain is Metal tolerance protein 4 (MTP4) from Oryza sativa subsp. japonica (Rice).